We begin with the raw amino-acid sequence, 997 residues long: DNA polymerase I (997 aa).

A 5'-3' exonuclease domain is found at 174-261 (VMPTQLLDLF…VPCVFSLEDS (88 aa)). One can recognise a 3'-5' exonuclease domain in the interval 428–589 (VPDVSLHTES…LYHYLKLRLE (162 aa)).

It belongs to the DNA polymerase type-A family.

The enzyme catalyses DNA(n) + a 2'-deoxyribonucleoside 5'-triphosphate = DNA(n+1) + diphosphate. Its function is as follows. In addition to polymerase activity, this DNA polymerase exhibits 3'-5' and 5'-3' exonuclease activity. This is DNA polymerase I (polA) from Treponema pallidum (strain Nichols).